The primary structure comprises 439 residues: Ribosomal protein uS12 methylthiotransferase RimO (439 aa).

Residues 7 to 119 (KQLCLISLGC…IDILIAKKQN (113 aa)) form the MTTase N-terminal domain. C16, C50, C82, C151, C155, and C158 together coordinate [4Fe-4S] cluster. Residues 137–368 (TGSSVHAYVK…ALKHQNHSFK (232 aa)) form the Radical SAM core domain.

The protein belongs to the methylthiotransferase family. RimO subfamily. [4Fe-4S] cluster serves as cofactor.

The protein localises to the cytoplasm. The catalysed reaction is L-aspartate(89)-[ribosomal protein uS12]-hydrogen + (sulfur carrier)-SH + AH2 + 2 S-adenosyl-L-methionine = 3-methylsulfanyl-L-aspartate(89)-[ribosomal protein uS12]-hydrogen + (sulfur carrier)-H + 5'-deoxyadenosine + L-methionine + A + S-adenosyl-L-homocysteine + 2 H(+). Functionally, catalyzes the methylthiolation of an aspartic acid residue of ribosomal protein uS12. This is Ribosomal protein uS12 methylthiotransferase RimO from Helicobacter pylori (strain J99 / ATCC 700824) (Campylobacter pylori J99).